Consider the following 166-residue polypeptide: Phospholipase A2 inhibitor clone 02/03/06/07 (166 aa).

An N-terminal signal peptide occupies residues 1 to 19 (MRLILLSGLLLLGTFLANG). The C-type lectin domain occupies 46–161 (LKHAFLTVHK…CDDNLLVVCE (116 aa)). 2 disulfides stabilise this stretch: cysteine 83/cysteine 160 and cysteine 138/cysteine 152. N-linked (GlcNAc...) asparagine glycosylation is present at asparagine 122.

This sequence belongs to the alpha-type phospholipase A2 inhibitor family. In terms of assembly, homotrimer; non-covalently linked. In terms of tissue distribution, expressed by the liver.

The protein resides in the secreted. Its function is as follows. This phospholipase A2 inhibitor binds directly phospholipase A2 in the presence or absence of calcium. The sequence is that of Phospholipase A2 inhibitor clone 02/03/06/07 from Lachesis muta muta (Bushmaster).